The primary structure comprises 238 residues: tRNA (guanine-N(7)-)-methyltransferase (238 aa).

E68, E93, D120, and D143 together coordinate S-adenosyl-L-methionine. Residue D143 is part of the active site. Substrate contacts are provided by residues K147, D179, and 216–219 (TKFE).

Belongs to the class I-like SAM-binding methyltransferase superfamily. TrmB family.

It catalyses the reaction guanosine(46) in tRNA + S-adenosyl-L-methionine = N(7)-methylguanosine(46) in tRNA + S-adenosyl-L-homocysteine. The protein operates within tRNA modification; N(7)-methylguanine-tRNA biosynthesis. In terms of biological role, catalyzes the formation of N(7)-methylguanine at position 46 (m7G46) in tRNA. The protein is tRNA (guanine-N(7)-)-methyltransferase of Shewanella sp. (strain MR-4).